The sequence spans 512 residues: Photosystem II CP47 reaction center protein (512 aa).

A run of 6 helical transmembrane segments spans residues 21–36, 101–115, 140–156, 203–218, 237–252, and 457–472; these read AVHL…WAGS, IVLS…IWHW, GIHL…FGAF, IAAG…FHLS, VLSS…AFVV, and TFAL…HGAR.

Belongs to the PsbB/PsbC family. PsbB subfamily. PSII is composed of 1 copy each of membrane proteins PsbA, PsbB, PsbC, PsbD, PsbE, PsbF, PsbH, PsbI, PsbJ, PsbK, PsbL, PsbM, PsbT, PsbX, PsbY, PsbZ, Psb30/Ycf12, at least 3 peripheral proteins of the oxygen-evolving complex and a large number of cofactors. It forms dimeric complexes. Requires Binds multiple chlorophylls. PSII binds additional chlorophylls, carotenoids and specific lipids. as cofactor.

The protein resides in the plastid. It localises to the chloroplast thylakoid membrane. One of the components of the core complex of photosystem II (PSII). It binds chlorophyll and helps catalyze the primary light-induced photochemical processes of PSII. PSII is a light-driven water:plastoquinone oxidoreductase, using light energy to abstract electrons from H(2)O, generating O(2) and a proton gradient subsequently used for ATP formation. The chain is Photosystem II CP47 reaction center protein from Physcomitrium patens (Spreading-leaved earth moss).